Consider the following 87-residue polypeptide: U-scoloptoxin(23)-Er1a (87 aa).

A signal peptide spans Met1–Ser29. A disordered region spans residues Phe32 to Lys54.

This sequence belongs to the scoloptoxin-23 family. In terms of tissue distribution, expressed by the venom gland.

The protein resides in the secreted. The sequence is that of U-scoloptoxin(23)-Er1a from Ethmostigmus rubripes (Giant centipede).